Here is a 116-residue protein sequence, read N- to C-terminus: Ribosome-binding factor A (116 aa).

Belongs to the RbfA family. Monomer. Binds 30S ribosomal subunits, but not 50S ribosomal subunits or 70S ribosomes.

Its subcellular location is the cytoplasm. One of several proteins that assist in the late maturation steps of the functional core of the 30S ribosomal subunit. Associates with free 30S ribosomal subunits (but not with 30S subunits that are part of 70S ribosomes or polysomes). Required for efficient processing of 16S rRNA. May interact with the 5'-terminal helix region of 16S rRNA. The sequence is that of Ribosome-binding factor A from Ureaplasma urealyticum serovar 10 (strain ATCC 33699 / Western).